Consider the following 471-residue polypeptide: tRNA-2-methylthio-N(6)-dimethylallyladenosine synthase (471 aa).

In terms of domain architecture, MTTase N-terminal spans 33 to 151; that stretch reads KKYMITTYGC…FPELLSRSME (119 aa). [4Fe-4S] cluster-binding residues include cysteine 42, cysteine 78, cysteine 112, cysteine 188, cysteine 192, and cysteine 195. Residues 174–404 enclose the Radical SAM core domain; that stretch reads RKYDLKGFIN…LDKVNEISAE (231 aa). The TRAM domain maps to 407 to 470; that stretch reads QSYLNKVVEV…TFSLNGEVIQ (64 aa).

The protein belongs to the methylthiotransferase family. MiaB subfamily. Monomer. The cofactor is [4Fe-4S] cluster.

Its subcellular location is the cytoplasm. It carries out the reaction N(6)-dimethylallyladenosine(37) in tRNA + (sulfur carrier)-SH + AH2 + 2 S-adenosyl-L-methionine = 2-methylsulfanyl-N(6)-dimethylallyladenosine(37) in tRNA + (sulfur carrier)-H + 5'-deoxyadenosine + L-methionine + A + S-adenosyl-L-homocysteine + 2 H(+). In terms of biological role, catalyzes the methylthiolation of N6-(dimethylallyl)adenosine (i(6)A), leading to the formation of 2-methylthio-N6-(dimethylallyl)adenosine (ms(2)i(6)A) at position 37 in tRNAs that read codons beginning with uridine. This is tRNA-2-methylthio-N(6)-dimethylallyladenosine synthase from Alkaliphilus oremlandii (strain OhILAs) (Clostridium oremlandii (strain OhILAs)).